The sequence spans 292 residues: 4-hydroxy-tetrahydrodipicolinate synthase (292 aa).

Thr45 is a pyruvate binding site. Tyr133 functions as the Proton donor/acceptor in the catalytic mechanism. The active-site Schiff-base intermediate with substrate is Lys161. Position 203 (Ile203) interacts with pyruvate.

This sequence belongs to the DapA family. As to quaternary structure, homotetramer; dimer of dimers.

Its subcellular location is the cytoplasm. It catalyses the reaction L-aspartate 4-semialdehyde + pyruvate = (2S,4S)-4-hydroxy-2,3,4,5-tetrahydrodipicolinate + H2O + H(+). Its pathway is amino-acid biosynthesis; L-lysine biosynthesis via DAP pathway; (S)-tetrahydrodipicolinate from L-aspartate: step 3/4. Catalyzes the condensation of (S)-aspartate-beta-semialdehyde [(S)-ASA] and pyruvate to 4-hydroxy-tetrahydrodipicolinate (HTPA). The sequence is that of 4-hydroxy-tetrahydrodipicolinate synthase from Vibrio vulnificus (strain CMCP6).